Reading from the N-terminus, the 603-residue chain is Rab proteins geranylgeranyltransferase component A (603 aa).

Residue serine 470 is modified to Phosphoserine.

Belongs to the Rab GDI family.

Its function is as follows. Substrate-binding subunit (component A) of the Rab geranylgeranyltransferase (GGTase) complex. Binds unprenylated Rab proteins and presents the substrate peptide to the catalytic component B. The component A is thought to be regenerated by transferring its prenylated Rab back to the donor membrane. This chain is Rab proteins geranylgeranyltransferase component A (MRS6), found in Saccharomyces cerevisiae (strain ATCC 204508 / S288c) (Baker's yeast).